The chain runs to 517 residues: GMP synthase [glutamine-hydrolyzing] (517 aa).

In terms of domain architecture, Glutamine amidotransferase type-1 spans 9–199; the sequence is RILILDFGSQ…VLNVCGCEGL (191 aa). Catalysis depends on Cys-86, which acts as the Nucleophile. Catalysis depends on residues His-173 and Glu-175. Positions 200-392 constitute a GMPS ATP-PPase domain; sequence WTSASIIEDA…LGLPYNMLYR (193 aa). 227–233 contacts ATP; sequence SGGVDSS.

As to quaternary structure, homodimer.

The enzyme catalyses XMP + L-glutamine + ATP + H2O = GMP + L-glutamate + AMP + diphosphate + 2 H(+). The protein operates within purine metabolism; GMP biosynthesis; GMP from XMP (L-Gln route): step 1/1. Its function is as follows. Catalyzes the synthesis of GMP from XMP. This is GMP synthase [glutamine-hydrolyzing] from Aliivibrio salmonicida (strain LFI1238) (Vibrio salmonicida (strain LFI1238)).